We begin with the raw amino-acid sequence, 314 residues long: Methionyl-tRNA formyltransferase (314 aa).

112 to 115 provides a ligand contact to (6S)-5,6,7,8-tetrahydrofolate; it reads SLLP.

Belongs to the Fmt family.

It catalyses the reaction L-methionyl-tRNA(fMet) + (6R)-10-formyltetrahydrofolate = N-formyl-L-methionyl-tRNA(fMet) + (6S)-5,6,7,8-tetrahydrofolate + H(+). Functionally, attaches a formyl group to the free amino group of methionyl-tRNA(fMet). The formyl group appears to play a dual role in the initiator identity of N-formylmethionyl-tRNA by promoting its recognition by IF2 and preventing the misappropriation of this tRNA by the elongation apparatus. In Buchnera aphidicola subsp. Acyrthosiphon pisum (strain 5A), this protein is Methionyl-tRNA formyltransferase.